Here is a 977-residue protein sequence, read N- to C-terminus: Vacuolar protein sorting-associated protein 54 (977 aa).

A Phosphoserine modification is found at Ser-8. The stretch at 239 to 261 forms a coiled coil; the sequence is HELQDYLKKTTQAVKMLRDKIAQ. The interval 528–573 is disordered; that stretch reads ASAAVDTTSQRNTSPHSEPCSSDSVSEPECTTDSSSSKEQTSACAP. Over residues 532–570 the composition is skewed to polar residues; that stretch reads VDTTSQRNTSPHSEPCSSDSVSEPECTTDSSSSKEQTSA.

This sequence belongs to the VPS54 family. In terms of assembly, component of the Golgi-associated retrograde protein (GARP) complex, also called VFT (VPS fifty-three) complex, composed of VPS51, VPS52, VPS53 and VPS54. EIPR1 interacts with GARP complex and mediates its recruitment to the trans-Golgi network. Interacts with VPS51 in an EIPR1-independent manner.

It is found in the golgi apparatus. The protein resides in the trans-Golgi network. The protein localises to the membrane. In terms of biological role, acts as a component of the GARP complex that is involved in retrograde transport from early and late endosomes to the trans-Golgi network (TGN). The GARP complex is required for the maintenance of the cycling of mannose 6-phosphate receptors between the TGN and endosomes, this cycling is necessary for proper lysosomal sorting of acid hydrolases such as CTSD. Within the GARP complex, required to tether the complex to the TGN. Not involved in endocytic recycling. The chain is Vacuolar protein sorting-associated protein 54 (Vps54) from Mus musculus (Mouse).